The primary structure comprises 1199 residues: MLDVNNFEYMNIGLASPDKIRSWSYGEVKKPETINYRTLKPEKDGLFCERIFGPQKDWECHCGKYKRVRYKGVVCDRCGVEVTRAKVRRERMGHIELAAPVSHIWYFKGIPSRMGLVLDMSPRALEEVIYFASYVVTDPANTPLEKKQLLSEKEYRAYLDKYGNKFQASMGAEAIHKLLQDIDLDKEVDMLKEELKTSQGQRRTRAIKRLEVLEAFRNSGNKPSWMILDVLPVIPPELRPMVQLDGGRFATSDLNDLYRRVINRNNRLKRLLDLGAPSIIVQNEKRMLQEAVDALIDNGRRGRPVTGPGNRPLKSLSHMLKGKQGRFRQNLLGKRVDYSGRSVIVVGPNLKMYQCGLPKEMALELFKPFVMKELVEKGLAHNIKSAKRKIERVQPEVWDVLESVIKEHPVLLNRAPTLHRLGIQAFEPTLVEGRAIRLHPLVCTAYNADFDGDQMAVHVPLSAEAQAEARILMLAAQNILNPKDGKPVVTPSQDMVLGNYYLTLERPGAVGEGMIFKDTDEALLAYQNGYVHLHTRVAVAVNSLKNETFTEEQRSKLLITTVGKLIFNEILPPSFPYMNEPTKSNIEEKTPDRFFLDYGADVKEAIKNQEINPPFKKGILGKIIAEIFKRFHITETSKMLDRMKNLGFKYSTKAGITVGVSDIVVLDDKQEILEEAQGKVDNVMKQFRRGLITEEERYERVISIWSAAKDTIQGKLMKSLDEINPIYMMSDSGARGNASNFTQLAGMRGLMANPAGRIIELPIKSSFREGLTVLEYFISTHGARKGLADTALKTADSGYLTRRLVDVAQDVIIRETDCGTDRGILAKAITEGTEVIERLEERLVGRFARKPVKHPETGEVLVNENELIDEDKAIEIVEAGIEEVWIRSAFTCNTSHGVCKRCYGRNLATGTDVEVGEAVGIIAAQSIGEPGTQLTMRTFHTGGVAGDDITQGLPRIQELFEARNPKGQATISEIDGVVAEINEVRDKQQEIVVQGEVESRSYTAPYNARLKVTEGEKISRGQVLTEGSVDPKELLKVTDITTVQEYLLHEVQKVYRMQGVEIGDKHVEVMVRQMLRKVRVIDAGDTEVLPGTLLDIHQFTEANKKVLLEGKRPATGRPVLLGITKASLETDSFLSAASFQETTRVLTDAAIKGKRDELLGLKENVIIGKLVPAGTGMLNYRKVKPVLQVQSSDEMVPAE.

Zn(2+)-binding residues include Cys-60, Cys-62, Cys-75, and Cys-78. Mg(2+) is bound by residues Asp-449, Asp-451, and Asp-453. Residues Cys-818, Cys-892, Cys-899, and Cys-902 each contribute to the Zn(2+) site.

Belongs to the RNA polymerase beta' chain family. The RNAP catalytic core consists of 2 alpha, 1 beta, 1 beta' and 1 omega subunit. When a sigma factor is associated with the core the holoenzyme is formed, which can initiate transcription. Mg(2+) serves as cofactor. The cofactor is Zn(2+).

It carries out the reaction RNA(n) + a ribonucleoside 5'-triphosphate = RNA(n+1) + diphosphate. DNA-dependent RNA polymerase catalyzes the transcription of DNA into RNA using the four ribonucleoside triphosphates as substrates. This chain is DNA-directed RNA polymerase subunit beta', found in Bacillus licheniformis (strain ATCC 14580 / DSM 13 / JCM 2505 / CCUG 7422 / NBRC 12200 / NCIMB 9375 / NCTC 10341 / NRRL NRS-1264 / Gibson 46).